The following is a 291-amino-acid chain: 4-diphosphocytidyl-2-C-methyl-D-erythritol kinase (291 aa).

Residue Lys14 is part of the active site. 96-106 serves as a coordination point for ATP; that stretch reads PFGAGLGGGSS. The active site involves Asp138.

This sequence belongs to the GHMP kinase family. IspE subfamily.

The enzyme catalyses 4-CDP-2-C-methyl-D-erythritol + ATP = 4-CDP-2-C-methyl-D-erythritol 2-phosphate + ADP + H(+). Its pathway is isoprenoid biosynthesis; isopentenyl diphosphate biosynthesis via DXP pathway; isopentenyl diphosphate from 1-deoxy-D-xylulose 5-phosphate: step 3/6. Functionally, catalyzes the phosphorylation of the position 2 hydroxy group of 4-diphosphocytidyl-2C-methyl-D-erythritol. The chain is 4-diphosphocytidyl-2-C-methyl-D-erythritol kinase from Chlorobium phaeovibrioides (strain DSM 265 / 1930) (Prosthecochloris vibrioformis (strain DSM 265)).